Consider the following 189-residue polypeptide: Probable nicotinate-nucleotide adenylyltransferase (189 aa).

Belongs to the NadD family.

It carries out the reaction nicotinate beta-D-ribonucleotide + ATP + H(+) = deamido-NAD(+) + diphosphate. Its pathway is cofactor biosynthesis; NAD(+) biosynthesis; deamido-NAD(+) from nicotinate D-ribonucleotide: step 1/1. Its function is as follows. Catalyzes the reversible adenylation of nicotinate mononucleotide (NaMN) to nicotinic acid adenine dinucleotide (NaAD). The chain is Probable nicotinate-nucleotide adenylyltransferase from Bacillus cereus (strain Q1).